A 108-amino-acid chain; its full sequence is MKPDFEKGDGLLTTVVTDADTKDVLMVAWMNAESYQRTLASGQTWFWSRSRQELWHKGATSGNLQDVVSMTLDCDQDTLLVAVHPHGPACHTGHTSCFFNPVELEQGA.

Asp73 serves as a coordination point for Mg(2+). Residue Cys74 coordinates Zn(2+). Positions 75 and 77 each coordinate Mg(2+). Zn(2+)-binding residues include Cys90 and Cys97.

This sequence belongs to the PRA-CH family. As to quaternary structure, homodimer. The cofactor is Mg(2+). It depends on Zn(2+) as a cofactor.

It localises to the cytoplasm. The enzyme catalyses 1-(5-phospho-beta-D-ribosyl)-5'-AMP + H2O = 1-(5-phospho-beta-D-ribosyl)-5-[(5-phospho-beta-D-ribosylamino)methylideneamino]imidazole-4-carboxamide. It functions in the pathway amino-acid biosynthesis; L-histidine biosynthesis; L-histidine from 5-phospho-alpha-D-ribose 1-diphosphate: step 3/9. Its function is as follows. Catalyzes the hydrolysis of the adenine ring of phosphoribosyl-AMP. This chain is Phosphoribosyl-AMP cyclohydrolase, found in Lactiplantibacillus plantarum (strain ATCC BAA-793 / NCIMB 8826 / WCFS1) (Lactobacillus plantarum).